The primary structure comprises 416 residues: Serine/threonine-protein kinase 26 (416 aa).

At Ala-2 the chain carries N-acetylalanine. Ser-4 is subject to Phosphoserine. The 251-residue stretch at 24–274 (FTKLERIGKG…AKELLKHKFI (251 aa)) folds into the Protein kinase domain. Residues 30–38 (IGKGSFGEV) and Lys-53 each bind ATP. Asp-144 serves as the catalytic Proton acceptor. Thr-178 is subject to Phosphothreonine; by autocatalysis. The interval 296–343 (AEGHSDEESDSEGSDSESSSRESNPHPEWSFTTVRKKPDPKKLQNGEE) is disordered. 5 positions are modified to phosphoserine: Ser-300, Ser-304, Ser-306, Ser-309, and Ser-325. Residues Thr-327 and Thr-328 each carry the phosphothreonine modification. The span at 331–340 (KKPDPKKLQN) shows a compositional bias: basic and acidic residues.

The protein belongs to the protein kinase superfamily. STE Ser/Thr protein kinase family. STE20 subfamily. In terms of assembly, homodimer. Interacts with PDCD10. Interacts with GOLGA2. Interacts with CTTNBP2NL. Interacts with RIPOR1 (via C-terminus); this interaction occurs in a PDCD10-dependent and Rho-independent manner. Interacts with PDCD10; this interaction is required for the association of STK26 with RIPOR1. Part of the core of STRIPAK complexes composed of PP2A catalytic and scaffolding subunits, the striatins (PP2A regulatory subunits), the striatin-associated proteins MOB4, STRIP1 and STRIP2, PDCD10 and members of the STE20 kinases, such as STK24 and STK26. Mg(2+) serves as cofactor.

It is found in the cytoplasm. It localises to the golgi apparatus. The enzyme catalyses L-seryl-[protein] + ATP = O-phospho-L-seryl-[protein] + ADP + H(+). It carries out the reaction L-threonyl-[protein] + ATP = O-phospho-L-threonyl-[protein] + ADP + H(+). Its activity is regulated as follows. Interaction with Golgi matrix protein GOLGA2 leads to autophosphorylation on Thr-178, possibly as a consequence of stabilization of dimer formation. May also be activated by C-terminal cleavage. Serine/threonine-protein kinase that acts as a mediator of cell growth. Modulates apoptosis. In association with STK24 negatively regulates Golgi reorientation in polarized cell migration upon RHO activation. Phosphorylates ATG4B at 'Ser-383', thereby increasing autophagic flux. Part of the striatin-interacting phosphatase and kinase (STRIPAK) complexes. STRIPAK complexes have critical roles in protein (de)phosphorylation and are regulators of multiple signaling pathways including Hippo, MAPK, nuclear receptor and cytoskeleton remodeling. Different types of STRIPAK complexes are involved in a variety of biological processes such as cell growth, differentiation, apoptosis, metabolism and immune regulation. In Mus musculus (Mouse), this protein is Serine/threonine-protein kinase 26.